Reading from the N-terminus, the 214-residue chain is Adenylate kinase (214 aa).

ATP is bound at residue 10–15 (GAGKGT). Residues 30-59 (STGDMFREEISAKSELGRKVEDILKRGELV) form an NMP region. AMP contacts are provided by residues threonine 31, arginine 36, 57-59 (ELV), 85-88 (GYPR), and glutamine 92. The segment at 126 to 163 (NRRICKNCGKIYNLITLPPKINGKCDVCGGELYQREDD) is LID. Arginine 127 provides a ligand contact to ATP. The Zn(2+) site is built by cysteine 130 and cysteine 133. 136 to 137 (IY) contributes to the ATP binding site. Zn(2+)-binding residues include cysteine 150 and cysteine 153. AMP is bound by residues arginine 160 and arginine 171. An ATP-binding site is contributed by methionine 199.

This sequence belongs to the adenylate kinase family. In terms of assembly, monomer.

It is found in the cytoplasm. The enzyme catalyses AMP + ATP = 2 ADP. It participates in purine metabolism; AMP biosynthesis via salvage pathway; AMP from ADP: step 1/1. Functionally, catalyzes the reversible transfer of the terminal phosphate group between ATP and AMP. Plays an important role in cellular energy homeostasis and in adenine nucleotide metabolism. The sequence is that of Adenylate kinase from Thermosipho melanesiensis (strain DSM 12029 / CIP 104789 / BI429).